Here is a 299-residue protein sequence, read N- to C-terminus: ATP phosphoribosyltransferase (299 aa).

The protein belongs to the ATP phosphoribosyltransferase family. Long subfamily. Mg(2+) is required as a cofactor.

It is found in the cytoplasm. It catalyses the reaction 1-(5-phospho-beta-D-ribosyl)-ATP + diphosphate = 5-phospho-alpha-D-ribose 1-diphosphate + ATP. Its pathway is amino-acid biosynthesis; L-histidine biosynthesis; L-histidine from 5-phospho-alpha-D-ribose 1-diphosphate: step 1/9. Feedback inhibited by histidine. Catalyzes the condensation of ATP and 5-phosphoribose 1-diphosphate to form N'-(5'-phosphoribosyl)-ATP (PR-ATP). Has a crucial role in the pathway because the rate of histidine biosynthesis seems to be controlled primarily by regulation of HisG enzymatic activity. In Shewanella oneidensis (strain ATCC 700550 / JCM 31522 / CIP 106686 / LMG 19005 / NCIMB 14063 / MR-1), this protein is ATP phosphoribosyltransferase.